Consider the following 84-residue polypeptide: Sulfur carrier protein TusA (84 aa).

Catalysis depends on Cys-19, which acts as the Cysteine persulfide intermediate.

Belongs to the sulfur carrier protein TusA family. As to quaternary structure, interacts with IscS.

It localises to the cytoplasm. Its pathway is tRNA modification. In terms of biological role, sulfur carrier protein involved in sulfur trafficking in the cell. Part of a sulfur-relay system required for 2-thiolation during synthesis of 2-thiouridine of the modified wobble base 5-methylaminomethyl-2-thiouridine (mnm(5)s(2)U) in tRNA. Interacts with IscS and stimulates its cysteine desulfurase activity. Accepts an activated sulfur from IscS, which is then transferred to TusD, and thus determines the direction of sulfur flow from IscS to 2-thiouridine formation. Also appears to be involved in sulfur transfer for the biosynthesis of molybdopterin. The sequence is that of Sulfur carrier protein TusA from Sodalis glossinidius (strain morsitans).